Here is a 168-residue protein sequence, read N- to C-terminus: Prespore-specific protein A (168 aa).

The N-terminal stretch at 1-19 (MKFQHTFIALLSLLTYANA) is a signal peptide. Residues threonine 110, threonine 114, threonine 116, threonine 118, threonine 120, threonine 122, threonine 124, threonine 126, threonine 128, threonine 130, threonine 132, threonine 134, and threonine 138 are each glycosylated (O-linked (GlcNAc) threonine). 3 tandem repeats follow at residues 116–119 (TPTV), 120–123 (TPTV), and 124–127 (TPTV). Residues 116-127 (TPTVTPTVTPTV) are 3 X 4 AA tandem repeats of T-P-T-V. A compositionally biased stretch (low complexity) spans 116 to 131 (TPTVTPTVTPTVTPTP). The tract at residues 116–147 (TPTVTPTVTPTVTPTPTNTPNPTPSQTSTTTG) is disordered. A glycan (O-linked (GlcNAc) serine) is linked at serine 140. Glycine 147 is lipidated: GPI-like-anchor amidated glycine. Positions 148 to 168 (SASTVVASLSLIIFSMILSLC) are cleaved as a propeptide — removed in mature form.

Belongs to the ponticulin family. In terms of processing, O-glycosylated in the repeat region. The oligosaccharides contain N-acetylglucosamine and fucose as the major constituents. The GPI-like-anchor contains a phosphoceramide group, rather than a phosphatidyl group.

It localises to the cell membrane. May bind F-actin and nucleates actin assembly. This Dictyostelium discoideum (Social amoeba) protein is Prespore-specific protein A (pspA).